The chain runs to 422 residues: UDP-N-acetylglucosamine 1-carboxyvinyltransferase (422 aa).

A phosphoenolpyruvate-binding site is contributed by 22-23 (KN). Residue Arg-93 participates in UDP-N-acetyl-alpha-D-glucosamine binding. Cys-117 acts as the Proton donor in catalysis. The residue at position 117 (Cys-117) is a 2-(S-cysteinyl)pyruvic acid O-phosphothioketal. Residues 122 to 126 (RPVDQ), Asp-305, and Ile-327 contribute to the UDP-N-acetyl-alpha-D-glucosamine site.

It belongs to the EPSP synthase family. MurA subfamily.

It localises to the cytoplasm. The enzyme catalyses phosphoenolpyruvate + UDP-N-acetyl-alpha-D-glucosamine = UDP-N-acetyl-3-O-(1-carboxyvinyl)-alpha-D-glucosamine + phosphate. It participates in cell wall biogenesis; peptidoglycan biosynthesis. In terms of biological role, cell wall formation. Adds enolpyruvyl to UDP-N-acetylglucosamine. The chain is UDP-N-acetylglucosamine 1-carboxyvinyltransferase from Bordetella petrii (strain ATCC BAA-461 / DSM 12804 / CCUG 43448).